Reading from the N-terminus, the 95-residue chain is Co-chaperonin GroES (95 aa).

The protein belongs to the GroES chaperonin family. As to quaternary structure, heptamer of 7 subunits arranged in a ring. Interacts with the chaperonin GroEL.

It is found in the cytoplasm. Its function is as follows. Together with the chaperonin GroEL, plays an essential role in assisting protein folding. The GroEL-GroES system forms a nano-cage that allows encapsulation of the non-native substrate proteins and provides a physical environment optimized to promote and accelerate protein folding. GroES binds to the apical surface of the GroEL ring, thereby capping the opening of the GroEL channel. The sequence is that of Co-chaperonin GroES from Glaesserella parasuis serovar 5 (strain SH0165) (Haemophilus parasuis).